The primary structure comprises 276 residues: Anthranilate synthase beta subunit 1, chloroplastic (276 aa).

A chloroplast-targeting transit peptide spans 1 to 50; it reads MAASTLYKSCLLQPKSGSTTRRLNPSLVNPLTNPTRVSVLGKSRRDVFAK. The Glutamine amidotransferase type-1 domain occupies 74–273; the sequence is PIIVIDNYDS…IKIVEKKESE (200 aa). Catalysis depends on Cys152, which acts as the Nucleophile. Residues His247 and Glu249 contribute to the active site.

In terms of assembly, heterotetramer consisting of two non-identical subunits: a beta subunit and a large alpha subunit. Expressed in the central cylinder of mature primary root zones, including pericycle and early lateral root primordia, and vasculature of cotyledons.

It localises to the plastid. The protein resides in the chloroplast. It carries out the reaction chorismate + L-glutamine = anthranilate + pyruvate + L-glutamate + H(+). Its pathway is amino-acid biosynthesis; L-tryptophan biosynthesis; L-tryptophan from chorismate: step 1/5. Its function is as follows. Part of a heterotetrameric complex that catalyzes the two-step biosynthesis of anthranilate, an intermediate in the biosynthesis of L-tryptophan. In the first step, the glutamine-binding beta subunit of anthranilate synthase (AS) provides the glutamine amidotransferase activity which generates ammonia as a substrate that, along with chorismate, is used in the second step, catalyzed by the large alpha subunit of AS to produce anthranilate. Plays an important regulatory role in auxin production via the tryptophan-dependent biosynthetic pathway. This Arabidopsis thaliana (Mouse-ear cress) protein is Anthranilate synthase beta subunit 1, chloroplastic (ASB1).